The primary structure comprises 95 residues: Non-specific lipid-transfer protein (95 aa).

3 disulfides stabilise this stretch: Cys4–Cys52, Cys14–Cys29, and Cys50–Cys90.

This sequence belongs to the plant LTP family. Seeds.

Its function is as follows. Plant non-specific lipid-transfer proteins transfer phospholipids as well as galactolipids across membranes. May play a role in wax or cutin deposition in the cell walls of expanding epidermal cells and certain secretory tissues. In Eleusine coracana (Indian finger millet), this protein is Non-specific lipid-transfer protein.